A 37-amino-acid polypeptide reads, in one-letter code: Large ribosomal subunit protein bL36 (37 aa).

Belongs to the bacterial ribosomal protein bL36 family.

The chain is Large ribosomal subunit protein bL36 from Desulforapulum autotrophicum (strain ATCC 43914 / DSM 3382 / VKM B-1955 / HRM2) (Desulfobacterium autotrophicum).